An 87-amino-acid polypeptide reads, in one-letter code: uncharacterized protein (87 aa).

2 helical membrane-spanning segments follow: residues 7–27 and 64–84; these read LFFI…LYSI and GINI…IPLF.

Its subcellular location is the membrane. This is an uncharacterized protein from Schizosaccharomyces pombe (strain 972 / ATCC 24843) (Fission yeast).